The sequence spans 339 residues: Undecaprenyl-phosphate 4-deoxy-4-formamido-L-arabinose transferase (339 aa).

A run of 2 helical transmembrane segments spans residues Leu235–Val255 and Leu269–Leu289.

It belongs to the glycosyltransferase 2 family.

Its subcellular location is the cell inner membrane. It catalyses the reaction UDP-4-deoxy-4-formamido-beta-L-arabinose + di-trans,octa-cis-undecaprenyl phosphate = 4-deoxy-4-formamido-alpha-L-arabinopyranosyl di-trans,octa-cis-undecaprenyl phosphate + UDP. The protein operates within glycolipid biosynthesis; 4-amino-4-deoxy-alpha-L-arabinose undecaprenyl phosphate biosynthesis; 4-amino-4-deoxy-alpha-L-arabinose undecaprenyl phosphate from UDP-4-deoxy-4-formamido-beta-L-arabinose and undecaprenyl phosphate: step 1/2. Its pathway is bacterial outer membrane biogenesis; lipopolysaccharide biosynthesis. In terms of biological role, catalyzes the transfer of 4-deoxy-4-formamido-L-arabinose from UDP to undecaprenyl phosphate. The modified arabinose is attached to lipid A and is required for resistance to polymyxin and cationic antimicrobial peptides. The sequence is that of Undecaprenyl-phosphate 4-deoxy-4-formamido-L-arabinose transferase from Pseudomonas aeruginosa (strain UCBPP-PA14).